The sequence spans 248 residues: MAVQHLLFGVRRSCTFILACRRTAFQSSRAFTSIYTQFKVTDTKNIFRPLVFPVRVASAFTFTSAAVAKDVLLFEHDRTRFFRLLAIFCGGQFLFWAYLGHFAFTSLRDTRKYSEPQKVRTELGGFFSFDMNLGSNAWRYGFTSGCLIIGGGILALALLFSRRSVSRVILHKGGAKVSVYTQSPLGPQRSHHLTVPLSQVACYAHRQESHSFIPLKVKGYKFYFLLDKEGTVNNPKLFDITVGAYRPL.

The next 3 membrane-spanning stretches (helical) occupy residues 46 to 68 (IFRP…AAVA), 84 to 104 (LLAI…HFAF), and 140 to 160 (YGFT…ALLF).

Belongs to the TMEM223 family.

The protein resides in the mitochondrion inner membrane. Mitochondrial ribosome-associated protein involved in the first steps of cytochrome c oxidase complex (complex IV) biogenesis. Stimulates the translation of MT-CO1 mRNA and is a constituent of early MT-CO1 assembly intermediates. The chain is Transmembrane protein 223 from Danio rerio (Zebrafish).